The chain runs to 102 residues: Large ribosomal subunit protein bL21 (102 aa).

It belongs to the bacterial ribosomal protein bL21 family. Part of the 50S ribosomal subunit. Contacts protein L20.

Its function is as follows. This protein binds to 23S rRNA in the presence of protein L20. The chain is Large ribosomal subunit protein bL21 from Ehrlichia chaffeensis (strain ATCC CRL-10679 / Arkansas).